Here is a 211-residue protein sequence, read N- to C-terminus: Large ribosomal subunit protein uL3 (211 aa).

It belongs to the universal ribosomal protein uL3 family. As to quaternary structure, part of the 50S ribosomal subunit. Forms a cluster with proteins L14 and L19.

One of the primary rRNA binding proteins, it binds directly near the 3'-end of the 23S rRNA, where it nucleates assembly of the 50S subunit. The sequence is that of Large ribosomal subunit protein uL3 from Citrifermentans bemidjiense (strain ATCC BAA-1014 / DSM 16622 / JCM 12645 / Bem) (Geobacter bemidjiensis).